The following is a 301-amino-acid chain: Alpha-ketoglutarate-dependent sulfate ester dioxygenase (301 aa).

His-81 is a substrate binding site. Residues His-108 and Asp-110 each contribute to the Fe cation site. Residue Val-111 participates in substrate binding. Thr-135 contacts 2-oxoglutarate. His-264 serves as a coordination point for Fe cation. Arg-275 and Arg-279 together coordinate 2-oxoglutarate.

Belongs to the TfdA dioxygenase family. In terms of assembly, homotetramer. Fe(2+) serves as cofactor.

It carries out the reaction a primary linear alkyl sulfate ester + 2-oxoglutarate + O2 = an aldehyde + sulfate + succinate + CO2 + H(+). The catalysed reaction is 2-ethylhexyl sulfate + 2-oxoglutarate + O2 = 2-ethylhexanal + sulfate + succinate + CO2 + H(+). It catalyses the reaction decyl sulfate + 2-oxoglutarate + O2 = decanal + sulfate + succinate + CO2 + H(+). The enzyme catalyses hexyl sulfate + 2-oxoglutarate + O2 = hexanal + sulfate + succinate + CO2 + H(+). It carries out the reaction nonyl sufate + 2-oxoglutarate + O2 = nonanal + sulfate + succinate + CO2 + H(+). Strongly stimulated by ascorbate. In terms of biological role, catalyzes the oxygenolytic cleavage of 2-ethylhexyl sulfate (2-EHS) in the presence of alpha-ketoglutarate to yield 2-ethyl-hexanal and succinate, the decarboxylated form of alpha-ketoglutarate. It can accept a wide range of alpha-keto acids including 2-oxo-valerate, 2-oxo-adipate, 2-oxo-octanoate, 3-methyl-2-oxo-butyrate, oxaloacetate-alpha-ketoadipate, and alpha-ketooctanoate. It can catalyze the cleavage of medium-chain alkyl sulfate esters such as butylsulfate, pentylsulfate, hexylsulfate, heptylsulfate, octylsulfate, nonylsulfate, decylsulfate and sodium dodecyl sulfate (SDS). The protein is Alpha-ketoglutarate-dependent sulfate ester dioxygenase of Pseudomonas putida (Arthrobacter siderocapsulatus).